Here is a 285-residue protein sequence, read N- to C-terminus: Cell division protein DivIB (285 aa).

Residues 1-19 (MNEKNKNDESKHQEDKLQD) show a composition bias toward basic and acidic residues. The tract at residues 1 to 20 (MNEKNKNDESKHQEDKLQDQ) is disordered. Topologically, residues 1–66 (MNEKNKNDES…NRFNAMERNS (66 aa)) are cytoplasmic. A helical membrane pass occupies residues 67 to 87 (IHMIVILSIISLLLILLLSPL). The POTRA domain maps to 88-158 (MRFQKVEITG…QVAQIKIEEN (71 aa)). Topologically, residues 88–285 (MRFQKVEITG…FQVGTYFQQY (198 aa)) are extracellular.

The protein belongs to the FtsQ/DivIB family. DivIB subfamily.

It is found in the cell membrane. Cell division protein that may be involved in stabilizing or promoting the assembly of the division complex. This is Cell division protein DivIB from Weissella koreensis (strain KACC 15510).